Here is a 96-residue protein sequence, read N- to C-terminus: Large ribosomal subunit protein eL14 (96 aa).

It belongs to the eukaryotic ribosomal protein eL14 family.

This is Large ribosomal subunit protein eL14 from Staphylothermus marinus (strain ATCC 43588 / DSM 3639 / JCM 9404 / F1).